The chain runs to 336 residues: Phosphate acyltransferase (336 aa).

The protein belongs to the PlsX family. Homodimer. Probably interacts with PlsY.

Its subcellular location is the cytoplasm. The catalysed reaction is a fatty acyl-[ACP] + phosphate = an acyl phosphate + holo-[ACP]. It functions in the pathway lipid metabolism; phospholipid metabolism. Functionally, catalyzes the reversible formation of acyl-phosphate (acyl-PO(4)) from acyl-[acyl-carrier-protein] (acyl-ACP). This enzyme utilizes acyl-ACP as fatty acyl donor, but not acyl-CoA. The protein is Phosphate acyltransferase of Dictyoglomus turgidum (strain DSM 6724 / Z-1310).